We begin with the raw amino-acid sequence, 254 residues long: Phosphoribosylaminoimidazole-succinocarboxamide synthase (254 aa).

It belongs to the SAICAR synthetase family.

It carries out the reaction 5-amino-1-(5-phospho-D-ribosyl)imidazole-4-carboxylate + L-aspartate + ATP = (2S)-2-[5-amino-1-(5-phospho-beta-D-ribosyl)imidazole-4-carboxamido]succinate + ADP + phosphate + 2 H(+). It functions in the pathway purine metabolism; IMP biosynthesis via de novo pathway; 5-amino-1-(5-phospho-D-ribosyl)imidazole-4-carboxamide from 5-amino-1-(5-phospho-D-ribosyl)imidazole-4-carboxylate: step 1/2. The sequence is that of Phosphoribosylaminoimidazole-succinocarboxamide synthase from Brucella melitensis biotype 2 (strain ATCC 23457).